The sequence spans 433 residues: ATP-dependent protease ATPase subunit HslU (433 aa).

Residues I18, 60–65, D246, E311, and R383 each bind ATP; that span reads GVGKTE.

The protein belongs to the ClpX chaperone family. HslU subfamily. A double ring-shaped homohexamer of HslV is capped on each side by a ring-shaped HslU homohexamer. The assembly of the HslU/HslV complex is dependent on binding of ATP.

The protein resides in the cytoplasm. ATPase subunit of a proteasome-like degradation complex; this subunit has chaperone activity. The binding of ATP and its subsequent hydrolysis by HslU are essential for unfolding of protein substrates subsequently hydrolyzed by HslV. HslU recognizes the N-terminal part of its protein substrates and unfolds these before they are guided to HslV for hydrolysis. In Cereibacter sphaeroides (strain ATCC 17025 / ATH 2.4.3) (Rhodobacter sphaeroides), this protein is ATP-dependent protease ATPase subunit HslU.